We begin with the raw amino-acid sequence, 391 residues long: L-tryptophan--pyruvate aminotransferase 1 (391 aa).

Pyridoxal 5'-phosphate is bound by residues Y58, 100–101 (ST), N168, 191–194 (DFAY), 214–217 (TFSK), and R225. K217 carries the N6-(pyridoxal phosphate)lysine modification.

This sequence belongs to the alliinase family. Requires pyridoxal 5'-phosphate as cofactor. In terms of tissue distribution, expressed at the leaf margin and in the vasculature of emerging young leaves. Expressed in the quiescent center and in the vasculature of root tips. Detected in the shoot apical meristem, stems, sepals, stamen filaments, the shoot and root junction, the stigma and the base of the silique.

It is found in the cytoplasm. It catalyses the reaction L-tryptophan + 2-oxoglutarate = indole-3-pyruvate + L-glutamate. The catalysed reaction is L-tryptophan + pyruvate = indole-3-pyruvate + L-alanine. It functions in the pathway plant hormone metabolism; auxin biosynthesis. Inhibited by L-kynurenine. Its function is as follows. L-tryptophan aminotransferase involved in auxin (IAA) biosynthesis. Can convert L-tryptophan and pyruvate to indole-3-pyruvic acid (IPA) and alanine. Catalyzes the first step in IPA branch of the auxin biosynthetic pathway. Required for auxin production to initiate multiple change in growth in response to environmental and developmental cues. It is also active with phenylalanine, tyrosine, leucine, alanine, methionine and glutamine. Both TAA1 and TAR2 are required for maintaining proper auxin levels in roots, while TAA1, TAR1 and TAR2 are required for proper embryo patterning. Involved in the maintenance of the root stem cell niches and required for shade avoidance. The sequence is that of L-tryptophan--pyruvate aminotransferase 1 (TAA1) from Arabidopsis thaliana (Mouse-ear cress).